Consider the following 655-residue polypeptide: MGVFSIANQHIRFAVKLACAIVLALFIGFHFQLETPRWAVLTAAIVAAGPAFAAGGEPYSGAIRYRGMLRIIGTFIGCIAALIIIISMIRAPLLMILVCCVWAGFCTWISSLVRIENSYAWGLSGYTALIIVITIQTEPLLTPQFALERCSEIVIGIGCAILADLLFSPRSIKQEVDRELDSLLVAQYQLMQLCIKHGDSEEVDNAWGDLVRRTAALEGMRSNLNMESSRWVRANRRLKALNTLSLTLITQSCETYLIQNTRPELITDTFRELFETPVETVQDVHRQLKRMRRVIVWTGERETPVTLYSWVGAATRYLLLKRGVISNTKISATEEEILQGEPVVKVESAERHHAMVNFWRTTLSCVLGTLFWLWTGWTSGNGAMVMIAVVTSLAMRLPNPRMVCIDFIYGTLAALPLGLLYFLVIIPNTQQSMLLLCLSLAVLGFFIGIEVQKRRLGSMGALASTINIIVLDNPMTFHFSQFLDSALGQIVGCMLAFIVILLVRDKSKDRTGRVLLNQFVSAAVSAMTTNAARRKENRLPALYQQLFLLMNKFPGDLPKFRLALTMIIAHQRLRDAPIPVNEDLSVFHRQLRRTADHVISAGNDDKRRRYFGQLLDELDIYQEKLRIWEAPPQVTEPVKRLTGMLHKYQNALTDS.

The next 11 membrane-spanning stretches (helical) occupy residues 13 to 33 (FAVK…HFQL), 38 to 58 (WAVL…GGEP), 69 to 89 (LRII…ISMI), 93 to 113 (LLMI…SSLV), 121 to 141 (WGLS…EPLL), 152 to 172 (EIVI…PRSI), 370 to 390 (LFWL…IAVV), 407 to 427 (FIYG…VIIP), 431 to 451 (QSML…GIEV), 459 to 479 (MGAL…TFHF), and 482 to 502 (FLDS…VILL).

It belongs to the aromatic acid exporter ArAE (TC 2.A.85) family.

The protein localises to the cell inner membrane. Functionally, forms an efflux pump with AaeA. Could function as a metabolic relief valve, allowing to eliminate certain compounds when they accumulate to high levels in the cell. This is p-hydroxybenzoic acid efflux pump subunit AaeB from Salmonella arizonae (strain ATCC BAA-731 / CDC346-86 / RSK2980).